The chain runs to 462 residues: MGIQIIGQIERINGKELSYGDFAERYLAKNQPVVISDLTEDWRAREDWVSENGNPNLHVFATHFGKSRVQVADCDTREFTDQKRLEMSVTEFVEQWTNKDSIEESVLYLKDWHFVKEYPDYTAYQTPPLFSDDWLNVYLDNYQMHEDRDSFQKYDQISCSDYRFVYMGGKGSWTPLHADVFRSYSWSANVCGKKRWLFLPPPQSHLVYDRYMKNCVYDIFEEVNETKFPGFKKTTWLECIQEPGEIIFVPSGWHHQVYNLEDTISINHNWLNAYNLSWVWDLLWKDYKDTEESIEDIRDICDDFEAICQRNLAANTGMNLNDFFLFMSRFSLGNMVLLQSYSDKHKNLNSCSLAMAQNLLMNLSTILKVMMKMISAGGVTAEEVYLDLRETLEDPQFLRFVRDMGRTYARIHMEEEDQFLSSKELLQKLSGLAGPNMQICSPKDLVEMINHHNTFSSQIYFI.

The JmjC domain occupies valine 115–tyrosine 287. The Fe cation site is built by histidine 177, aspartate 179, and histidine 255.

It belongs to the JARID1 histone demethylase family. The cofactor is Fe(2+). In terms of tissue distribution, mostly expressed in leaves, and, to a lower extent, in inflorescences, roots, siliques and stems.

It localises to the nucleus. The catalysed reaction is N(omega),N(omega)-dimethyl-L-arginyl-[protein] + 2-oxoglutarate + O2 = N(omega)-methyl-L-arginyl-[protein] + formaldehyde + succinate + CO2. In terms of biological role, histone demethylase that demethylates 'Arg-3' (H4R3me) of histone H4 with a specific activity for H4R3me2. Involved in the positive regulation of gene expression. Together with JMJ22, positively regulates seed germination by promoting the removal of repressive histone arginine methylations (e.g. H4R3me2) at GA3ox1 and GA3ox2 to trigger gibberellic acid (GA) biosynthesis. In Arabidopsis thaliana (Mouse-ear cress), this protein is Arginine-specific demethylase JMJ20.